The following is a 77-amino-acid chain: Putative sulfur carrier protein YedF (77 aa).

The Cysteine persulfide intermediate role is filled by cysteine 17.

Belongs to the sulfur carrier protein TusA family.

The polypeptide is Putative sulfur carrier protein YedF (yedF) (Escherichia coli O157:H7).